The sequence spans 176 residues: Cytochrome c oxidase subunit 4 isoform 2, mitochondrial (176 aa).

Residues 1–28 (MLRLTAGRVRSLLAGRATAAFSTSSARM) constitute a mitochondrion transit peptide. The Mitochondrial matrix segment spans residues 29–106 (ASHDLEVAES…TYSEMKQPSS (78 aa)). A helical transmembrane segment spans residues 107–132 (EWKTVFGGIFIFLGFTGLVVWWQALY). Residues 133-176 (VYPPRPRTFDDEWKAKQLKRMLDMRVNPIEGFSAKWDYEKGQWK) are Mitochondrial intermembrane-facing.

Belongs to the cytochrome c oxidase IV family. In terms of assembly, component of the cytochrome c oxidase (complex IV, CIV), a multisubunit enzyme composed of 14 subunits. The complex is composed of a catalytic core of 3 subunits MT-CO1, MT-CO2 and MT-CO3, encoded in the mitochondrial DNA, and 11 supernumerary subunits COX4I, COX5A, COX5B, COX6A, COX6B, COX6C, COX7A, COX7B, COX7C, COX8 and NDUFA4, which are encoded in the nuclear genome. The complex exists as a monomer or a dimer and forms supercomplexes (SCs) in the inner mitochondrial membrane with NADH-ubiquinone oxidoreductase (complex I, CI) and ubiquinol-cytochrome c oxidoreductase (cytochrome b-c1 complex, complex III, CIII), resulting in different assemblies (supercomplex SCI(1)III(2)IV(1) and megacomplex MCI(2)III(2)IV(2)).

The protein resides in the mitochondrion inner membrane. It functions in the pathway energy metabolism; oxidative phosphorylation. Its function is as follows. Component of the cytochrome c oxidase, the last enzyme in the mitochondrial electron transport chain which drives oxidative phosphorylation. The respiratory chain contains 3 multisubunit complexes succinate dehydrogenase (complex II, CII), ubiquinol-cytochrome c oxidoreductase (cytochrome b-c1 complex, complex III, CIII) and cytochrome c oxidase (complex IV, CIV), that cooperate to transfer electrons derived from NADH and succinate to molecular oxygen, creating an electrochemical gradient over the inner membrane that drives transmembrane transport and the ATP synthase. Cytochrome c oxidase is the component of the respiratory chain that catalyzes the reduction of oxygen to water. Electrons originating from reduced cytochrome c in the intermembrane space (IMS) are transferred via the dinuclear copper A center (CU(A)) of subunit 2 and heme A of subunit 1 to the active site in subunit 1, a binuclear center (BNC) formed by heme A3 and copper B (CU(B)). The BNC reduces molecular oxygen to 2 water molecules using 4 electrons from cytochrome c in the IMS and 4 protons from the mitochondrial matrix. In Thunnus obesus (Bigeye tuna), this protein is Cytochrome c oxidase subunit 4 isoform 2, mitochondrial.